A 415-amino-acid polypeptide reads, in one-letter code: Ribulose bisphosphate carboxylase/oxygenase activase (415 aa).

37–44 contributes to the ATP binding site; that stretch reads GRKGEGKT.

It belongs to the RuBisCO activase family.

Activation of RuBisCO (ribulose-1,5-bisohosphate carboxylase/oxygenase; EC 4.1.1.39) involves the ATP-dependent carboxylation of the epsilon-amino group of lysine leading to a carbamate structure. This chain is Ribulose bisphosphate carboxylase/oxygenase activase (rca), found in Anabaena sp. (strain CA / ATCC 33047).